Consider the following 251-residue polypeptide: GTP cyclohydrolase 1 type 2 homolog (251 aa).

Positions 64, 65, 102, 219, and 223 each coordinate a divalent metal cation.

This sequence belongs to the GTP cyclohydrolase I type 2/NIF3 family. In terms of assembly, homohexamer.

The sequence is that of GTP cyclohydrolase 1 type 2 homolog from Chlamydia muridarum (strain MoPn / Nigg).